The following is a 689-amino-acid chain: Beta-adrenergic receptor kinase 1 (689 aa).

The interval 1–190 (MADLEAVLAD…ELNIHLTMND (190 aa)) is N-terminal. An RGS domain is found at 54-175 (TFEKIFSQKL…IESDKFTRFC (122 aa)). The 263-residue stretch at 191-453 (FSVHRIIGRG…AQEIKESPFF (263 aa)) folds into the Protein kinase domain. ATP-binding positions include 197–205 (IGRGGFGEV) and Lys-220. Asp-317 (proton acceptor) is an active-site residue. The region spanning 454–521 (RSLDWQMVFL…TISERWQQEV (68 aa)) is the AGC-kinase C-terminal domain. The PH domain maps to 558–652 (DCIMHGYMSK…WKKELRDAYR (95 aa)). Residue Ser-670 is modified to Phosphoserine.

This sequence belongs to the protein kinase superfamily. AGC Ser/Thr protein kinase family. GPRK subfamily. As to quaternary structure, interacts with the heterodimer formed by GNB1 and GNG2. Interacts with GIT1. Interacts with, and phosphorylates chemokine-stimulated CCR5. Interacts with ARRB1. Interacts with LPAR1 and LPAR2. Interacts with RALA in response to LPAR1 activation. ADRBK1 and RALA mutually inhibit each other's binding to LPAR1. Interacts with ADRB2. As to expression, expressed at low levels in brain cortex, hippocampus, striatum, hypothalamus, cerebellum and brainstem (at protein level).

Its subcellular location is the cytoplasm. It localises to the cell membrane. The protein localises to the postsynapse. The protein resides in the presynapse. It catalyses the reaction [beta-adrenergic receptor] + ATP = [beta-adrenergic receptor]-phosphate + ADP + H(+). With respect to regulation, in contrast to other AGC family kinases, the catalytic activity is solely regulated by the binding of substrates and ligands, not by phosphorylation of the kinase domain. In terms of biological role, specifically phosphorylates the agonist-occupied form of the beta-adrenergic and closely related receptors, probably inducing a desensitization of them. Key regulator of LPAR1 signaling. Competes with RALA for binding to LPAR1 thus affecting the signaling properties of the receptor. Desensitizes LPAR1 and LPAR2 in a phosphorylation-independent manner. Positively regulates ciliary smoothened (SMO)-dependent Hedgehog (Hh) signaling pathway by facilitating the trafficking of SMO into the cilium and the stimulation of SMO activity. Inhibits relaxation of airway smooth muscle in response to blue light. The polypeptide is Beta-adrenergic receptor kinase 1 (Rattus norvegicus (Rat)).